Here is a 412-residue protein sequence, read N- to C-terminus: Peptidase T (412 aa).

His78 provides a ligand contact to Zn(2+). Residue Asp80 is part of the active site. Residue Asp140 participates in Zn(2+) binding. Glu174 (proton acceptor) is an active-site residue. Positions 175, 197, and 379 each coordinate Zn(2+).

This sequence belongs to the peptidase M20B family. Requires Zn(2+) as cofactor.

Its subcellular location is the cytoplasm. It carries out the reaction Release of the N-terminal residue from a tripeptide.. Cleaves the N-terminal amino acid of tripeptides. This is Peptidase T from Staphylococcus epidermidis (strain ATCC 12228 / FDA PCI 1200).